The following is a 386-amino-acid chain: Porin PorA (386 aa).

An N-terminal signal peptide occupies residues Met-1–Pro-35. Positions Asp-53–Thr-63 are enriched in polar residues. Residues Asp-53–Glu-78 are disordered. Residues Pro-64–Glu-78 are compositionally biased toward basic and acidic residues.

It belongs to the PorA family.

It localises to the secreted. Its subcellular location is the cell wall. Forms water-filled channels that favor the permeation of cations. In Corynebacterium amycolatum, this protein is Porin PorA.